The following is a 127-amino-acid chain: uncharacterized protein (127 aa).

Helical transmembrane passes span 48 to 68 (LYSLLFSKVSIISCAVLPLSI) and 83 to 103 (VFLFLLSLHLLPYLASRCLID).

The protein localises to the membrane. This is an uncharacterized protein from Saccharomyces cerevisiae (strain ATCC 204508 / S288c) (Baker's yeast).